The sequence spans 103 residues: Co-chaperonin GroES (103 aa).

This sequence belongs to the GroES chaperonin family. In terms of assembly, heptamer of 7 subunits arranged in a ring. Interacts with the chaperonin GroEL.

The protein resides in the cytoplasm. Together with the chaperonin GroEL, plays an essential role in assisting protein folding. The GroEL-GroES system forms a nano-cage that allows encapsulation of the non-native substrate proteins and provides a physical environment optimized to promote and accelerate protein folding. GroES binds to the apical surface of the GroEL ring, thereby capping the opening of the GroEL channel. This chain is Co-chaperonin GroES, found in Thermosynechococcus vestitus (strain NIES-2133 / IAM M-273 / BP-1).